The following is a 1654-amino-acid chain: Mediator of RNA polymerase II transcription subunit 12 (1654 aa).

Disordered regions lie at residues 52 to 72 (DLNG…LSGN) and 1481 to 1530 (SKQT…SFQT). A compositionally biased stretch (polar residues) spans 1515-1530 (PLSSARPSSEAASFQT).

This sequence belongs to the Mediator complex subunit 12 family. Component of the SRB8-11 complex, which itself associates with the Mediator complex.

It is found in the nucleus. Component of the SRB8-11 complex. The SRB8-11 complex is a regulatory module of the Mediator complex which is itself involved in regulation of basal and activated RNA polymerase II-dependent transcription. The SRB8-11 complex may be involved in the transcriptional repression of a subset of genes regulated by Mediator. It may inhibit the association of the Mediator complex with RNA polymerase II to form the holoenzyme complex. This chain is Mediator of RNA polymerase II transcription subunit 12 (SRB8), found in Scheffersomyces stipitis (strain ATCC 58785 / CBS 6054 / NBRC 10063 / NRRL Y-11545) (Yeast).